We begin with the raw amino-acid sequence, 270 residues long: Regulator of G-protein signaling rgs-10 (270 aa).

The 118-residue stretch at 135–252 (SPETLAASEY…LEDPLYLDLV (118 aa)) folds into the RGS domain.

Functionally, shown to have a role in viability and embryogenesis. The sequence is that of Regulator of G-protein signaling rgs-10 (rgs-10) from Caenorhabditis elegans.